The primary structure comprises 336 residues: uncharacterized protein (336 aa).

NADP(+)-binding residues include Lys39 and Tyr166.

Belongs to the NAD(P)-dependent epimerase/dehydratase family. Dihydroflavonol-4-reductase subfamily.

It is found in the cytoplasm. It localises to the nucleus. This is an uncharacterized protein from Schizosaccharomyces pombe (strain 972 / ATCC 24843) (Fission yeast).